The following is a 464-amino-acid chain: Glutamate--tRNA ligase (464 aa).

Positions 9-19 (PSPTGYLHIGG) match the 'HIGH' region motif. The 'KMSKS' region motif lies at 242–246 (KISKR). Lys245 serves as a coordination point for ATP.

It belongs to the class-I aminoacyl-tRNA synthetase family. Glutamate--tRNA ligase type 1 subfamily. In terms of assembly, monomer.

The protein resides in the cytoplasm. The enzyme catalyses tRNA(Glu) + L-glutamate + ATP = L-glutamyl-tRNA(Glu) + AMP + diphosphate. Its function is as follows. Catalyzes the attachment of glutamate to tRNA(Glu) in a two-step reaction: glutamate is first activated by ATP to form Glu-AMP and then transferred to the acceptor end of tRNA(Glu). The chain is Glutamate--tRNA ligase from Neisseria gonorrhoeae (strain ATCC 700825 / FA 1090).